Consider the following 354-residue polypeptide: Protein RecA (354 aa).

An ATP-binding site is contributed by 65-72 (GPESSGKT).

The protein belongs to the RecA family.

Its subcellular location is the cytoplasm. Functionally, can catalyze the hydrolysis of ATP in the presence of single-stranded DNA, the ATP-dependent uptake of single-stranded DNA by duplex DNA, and the ATP-dependent hybridization of homologous single-stranded DNAs. It interacts with LexA causing its activation and leading to its autocatalytic cleavage. This is Protein RecA from Pseudomonas savastanoi pv. phaseolicola (strain 1448A / Race 6) (Pseudomonas syringae pv. phaseolicola (strain 1448A / Race 6)).